The sequence spans 290 residues: Glycine--tRNA ligase alpha subunit (290 aa).

Belongs to the class-II aminoacyl-tRNA synthetase family. In terms of assembly, tetramer of two alpha and two beta subunits.

It is found in the cytoplasm. The enzyme catalyses tRNA(Gly) + glycine + ATP = glycyl-tRNA(Gly) + AMP + diphosphate. This Maridesulfovibrio salexigens (strain ATCC 14822 / DSM 2638 / NCIMB 8403 / VKM B-1763) (Desulfovibrio salexigens) protein is Glycine--tRNA ligase alpha subunit.